Consider the following 649-residue polypeptide: 1-deoxy-D-xylulose-5-phosphate synthase 1 (649 aa).

Thiamine diphosphate-binding positions include His79 and Ala120 to Ser122. Asp151 provides a ligand contact to Mg(2+). Thiamine diphosphate contacts are provided by residues Gly152 to Ser153, Asn180, Tyr289, and Glu371. Asn180 lines the Mg(2+) pocket.

It belongs to the transketolase family. DXPS subfamily. Homodimer. It depends on Mg(2+) as a cofactor. Thiamine diphosphate serves as cofactor.

It carries out the reaction D-glyceraldehyde 3-phosphate + pyruvate + H(+) = 1-deoxy-D-xylulose 5-phosphate + CO2. It functions in the pathway metabolic intermediate biosynthesis; 1-deoxy-D-xylulose 5-phosphate biosynthesis; 1-deoxy-D-xylulose 5-phosphate from D-glyceraldehyde 3-phosphate and pyruvate: step 1/1. Catalyzes the acyloin condensation reaction between C atoms 2 and 3 of pyruvate and glyceraldehyde 3-phosphate to yield 1-deoxy-D-xylulose-5-phosphate (DXP). The polypeptide is 1-deoxy-D-xylulose-5-phosphate synthase 1 (Zymomonas mobilis subsp. mobilis (strain ATCC 31821 / ZM4 / CP4)).